We begin with the raw amino-acid sequence, 204 residues long: Ras-related protein Rab-7L1 (204 aa).

6 residues coordinate GTP: Ser33, Lys34, His35, Tyr36, Lys37, and Thr39. The short motif at 36 to 44 (YKSTVGVDF) is the Effector region element. A Phosphothreonine; by LRRK2 modification is found at Thr71. Ser72 carries the phosphoserine modification. GTP contacts are provided by Lys126, Val156, and Lys157. 2 S-geranylgeranyl cysteine lipidation sites follow: Cys203 and Cys204.

This sequence belongs to the small GTPase superfamily. Rab family. Interacts with LRRK2 (via the N-terminus); this interaction is direct and stimulates kinase activity. In terms of tissue distribution, expressed predominantly in kidney and much less in brain, heart, muscle, fat, liver, spleen, adrenal gland, ovary, thymus and lung. Not expressed in testis and intestine.

It is found in the cell membrane. Its subcellular location is the cytoplasm. The protein localises to the perinuclear region. The protein resides in the golgi apparatus. It localises to the golgi apparatus membrane. It is found in the trans-Golgi network. Its subcellular location is the cytoskeleton. In terms of biological role, the small GTPases Rab are key regulators in vesicle trafficking. Essential for maintaining the integrity of endosome-trans-Golgi network structure. Together with LRRK2, plays a role in the retrograde trafficking pathway for recycling proteins, such as mannose 6 phosphate receptor (M6PR), between lysosomes and the Golgi apparatus in a retromer-dependent manner. Recruits LRRK2 to the Golgi apparatus and stimulates LRRK2 kinase activity. Stimulates phosphorylation of RAB10 'Thr-73' by LRRK2. Regulates also neuronal process morphology in the intact central nervous system (CNS). The chain is Ras-related protein Rab-7L1 (Rab29) from Rattus norvegicus (Rat).